A 149-amino-acid polypeptide reads, in one-letter code: Deoxyuridine 5'-triphosphate nucleotidohydrolase (149 aa).

Residues 68-70 (RSG), asparagine 81, and 85-87 (LID) contribute to the substrate site.

Belongs to the dUTPase family. It depends on Mg(2+) as a cofactor.

It catalyses the reaction dUTP + H2O = dUMP + diphosphate + H(+). It functions in the pathway pyrimidine metabolism; dUMP biosynthesis; dUMP from dCTP (dUTP route): step 2/2. This enzyme is involved in nucleotide metabolism: it produces dUMP, the immediate precursor of thymidine nucleotides and it decreases the intracellular concentration of dUTP so that uracil cannot be incorporated into DNA. This Nitrosospira multiformis (strain ATCC 25196 / NCIMB 11849 / C 71) protein is Deoxyuridine 5'-triphosphate nucleotidohydrolase.